The following is a 282-amino-acid chain: Shikimate dehydrogenase (NADP(+)) (282 aa).

Shikimate is bound by residues S15–S17 and T62. K66 acts as the Proton acceptor in catalysis. N87 and D103 together coordinate shikimate. Residues G127–A131, N151–K156, and M220 each bind NADP(+). Y222 contributes to the shikimate binding site. G244 lines the NADP(+) pocket.

This sequence belongs to the shikimate dehydrogenase family. As to quaternary structure, homodimer.

It catalyses the reaction shikimate + NADP(+) = 3-dehydroshikimate + NADPH + H(+). Its pathway is metabolic intermediate biosynthesis; chorismate biosynthesis; chorismate from D-erythrose 4-phosphate and phosphoenolpyruvate: step 4/7. Involved in the biosynthesis of the chorismate, which leads to the biosynthesis of aromatic amino acids. Catalyzes the reversible NADPH linked reduction of 3-dehydroshikimate (DHSA) to yield shikimate (SA). This chain is Shikimate dehydrogenase (NADP(+)), found in Shewanella baltica (strain OS185).